The primary structure comprises 801 residues: Putative mRNA-capping enzyme P5 (801 aa).

It belongs to the phytoreovirus protein P5 family.

It is found in the virion. It localises to the host cytoplasm. The enzyme catalyses a 5'-end diphospho-ribonucleoside in mRNA + GTP + H(+) = a 5'-end (5'-triphosphoguanosine)-ribonucleoside in mRNA + diphosphate. Its pathway is mRNA processing; mRNA capping. Enzyme involved in mRNA capping (Potential). Binds to GTP and might have guanylyltransferase activity. Together with the RNA-directed RNA polymerase P1 and protein P7, forms an transcriptional complex positioned near the channels situated at each of the five-fold vertices of the core. The polypeptide is Putative mRNA-capping enzyme P5 (Alopecurus aequalis (Barnyard grass)).